A 144-amino-acid polypeptide reads, in one-letter code: Large ribosomal subunit protein uL13 (144 aa).

Belongs to the universal ribosomal protein uL13 family. In terms of assembly, part of the 50S ribosomal subunit.

Its function is as follows. This protein is one of the early assembly proteins of the 50S ribosomal subunit, although it is not seen to bind rRNA by itself. It is important during the early stages of 50S assembly. This Clostridium botulinum (strain ATCC 19397 / Type A) protein is Large ribosomal subunit protein uL13.